The chain runs to 359 residues: E3 ubiquitin-protein ligase RNF146 (359 aa).

The RING-type zinc finger occupies 38 to 76 (CAICLQTCVHPVSLPCKHVFCYLCVKGASWLGKRCALCR). Glycyl lysine isopeptide (Lys-Gly) (interchain with G-Cter in ubiquitin) cross-links involve residues K86 and K96. In terms of domain architecture, WWE spans 93–169 (EELKAASRGN…EHGRRRKIKR (77 aa)). Y109, R112, and W116 together coordinate a glycoprotein. K132 participates in a covalent cross-link: Glycyl lysine isopeptide (Lys-Gly) (interchain with G-Cter in ubiquitin). 4 residues coordinate a glycoprotein: Y146, Q155, R165, and K177. Residue K177 forms a Glycyl lysine isopeptide (Lys-Gly) (interchain with G-Cter in ubiquitin) linkage. Disordered regions lie at residues 197–243 (SSAD…DAGI) and 261–359 (ERSH…VTEV). Residues 199 to 212 (ADGADSGSAQTGAS) show a composition bias toward low complexity. Residues 217-235 (VPSSTRPLTSVDGQLTSPV) show a composition bias toward polar residues. Residues 284–298 (SVEETESDASSDSED) show a composition bias toward acidic residues. A phosphoserine mark is found at S290 and S294. A compositionally biased stretch (polar residues) spans 306-324 (HSLTQQRPLVPNGNQTVAD).

As to quaternary structure, can form homooligomers. Interacts with PARsylated AXIN1, AXIN2, BLZF1, CASC3, H1-2, IPO7, LIG3, NCL, PARP1, XRCC1, XRCC5 and XRCC6. Interacts with DDB1, DHX15, IQGAP1, LRPPRC, PARP2, PRKDC, RUVBL2, TNKS1 and TNKS2. Binding often leads to interactor ubiquitination, in the presence of the appropriate E1 and E2 enzymes, and proteasomal degradation. Ubiquitinated; autoubiquitinated. Autoubiquitination is enhanced upon PAR-binding. As to expression, expressed at relatively high levels in the brain. Also present in spleen, heart, kidney, testis and liver. In the brain, expressed in the cerebellum, hippocampus, striatum, cortex, frontal cortex and, at lowest levels, in olfactory bulb (at protein level). Predominantly expressed in neurons.

It localises to the cytoplasm. The protein localises to the cytosol. Its subcellular location is the nucleus. The enzyme catalyses S-ubiquitinyl-[E2 ubiquitin-conjugating enzyme]-L-cysteine + [acceptor protein]-L-lysine = [E2 ubiquitin-conjugating enzyme]-L-cysteine + N(6)-ubiquitinyl-[acceptor protein]-L-lysine.. The protein operates within protein modification; protein ubiquitination. Functionally, E3 ubiquitin-protein ligase that specifically binds poly-ADP-ribosylated (PARsylated) proteins and mediates their ubiquitination and subsequent degradation. May regulate many important biological processes, such as cell survival and DNA damage response. Acts as an activator of the Wnt signaling pathway by mediating the ubiquitination of PARsylated AXIN1 and AXIN2, 2 key components of the beta-catenin destruction complex. Acts in cooperation with tankyrase proteins (TNKS and TNKS2), which mediate PARsylation of target proteins AXIN1, AXIN2, BLZF1, CASC3, TNKS and TNKS2. Recognizes and binds tankyrase-dependent PARsylated proteins via its WWE domain and mediates their ubiquitination, leading to their degradation. Different ubiquitin linkage types have been observed: TNKS2 undergoes ubiquitination at 'Lys-48' and 'Lys-63', while AXIN1 is only ubiquitinated at 'Lys-48'. May regulate TNKS and TNKS2 subcellular location, preventing aggregation at a centrosomal location. Neuroprotective protein. Protects the brain against N-methyl-D-aspartate (NMDA) receptor-mediated glutamate excitotoxicity and ischemia, by interfering with PAR-induced cell death, called parthanatos. Prevents nuclear translocation of AIFM1 in a PAR-binding dependent manner. Does not affect PARP1 activation. Protects against cell death induced by DNA damaging agents, such as N-methyl-N-nitro-N-nitrosoguanidine (MNNG) and rescues cells from G1 arrest. Promotes cell survival after gamma-irradiation. Facilitates DNA repair. This is E3 ubiquitin-protein ligase RNF146 (Rnf146) from Mus musculus (Mouse).